The following is a 737-amino-acid chain: Catalase-peroxidase (737 aa).

A signal peptide spans 1–23 (MLKKILPVLITLAIVHNTPTAWA). Positions 102 to 223 (WHGAGTYRIY…LAATQMGLIY (122 aa)) form a cross-link, tryptophyl-tyrosyl-methioninium (Trp-Tyr) (with M-249). Residue His103 is the Proton acceptor of the active site. Positions 223-249 (YVNPEGPNGKPDPVAAAKDIREAFARM) form a cross-link, tryptophyl-tyrosyl-methioninium (Tyr-Met) (with W-102). Position 264 (His264) interacts with heme b.

This sequence belongs to the peroxidase family. Peroxidase/catalase subfamily. In terms of assembly, homodimer or homotetramer. Requires heme b as cofactor. Formation of the three residue Trp-Tyr-Met cross-link is important for the catalase, but not the peroxidase activity of the enzyme.

The enzyme catalyses H2O2 + AH2 = A + 2 H2O. The catalysed reaction is 2 H2O2 = O2 + 2 H2O. In terms of biological role, bifunctional enzyme with both catalase and broad-spectrum peroxidase activity. The sequence is that of Catalase-peroxidase from Yersinia pseudotuberculosis serotype I (strain IP32953).